Consider the following 710-residue polypeptide: Proline-rich receptor-like protein kinase PERK13 (710 aa).

The tract at residues 1–229 (MSDSPTSSPP…SVPPPANSGG (229 aa)) is disordered. At 1-235 (MSDSPTSSPP…NSGGGYQGKT (235 aa)) the chain is on the extracellular side. Pro residues-rich tracts occupy residues 7-21 (SSPP…PPPD), 29-130 (APPP…PPPP), 137-151 (PPAP…PPAS), and 168-188 (ATSP…PNAP). The N-linked (GlcNAc...) asparagine glycan is linked to Asn191. Residues 209–220 (SPSRGVPSSGNS) are compositionally biased toward low complexity. A helical membrane pass occupies residues 236–256 (MAGFAIAGFAVIALMAVVFLV). Topologically, residues 257 to 710 (RRKKKRNIDA…ENRNFNNRRY (454 aa)) are cytoplasmic. Residues 289–334 (QNPTKGYSGPGGYNSQQQSNSGNSFGSQRGGGGYTRSGSAPDSAVM) are disordered. Residues 301–315 (YNSQQQSNSGNSFGS) show a composition bias toward low complexity. Thr342 is subject to Phosphothreonine. One can recognise a Protein kinase domain in the interval 353–619 (FSKHNILGEG…RHSGPKRPRM (267 aa)). ATP is bound by residues 359–367 (LGEGGFGCV) and Lys381. Position 426 is a phosphotyrosine (Tyr426). Asp477 acts as the Proton acceptor in catalysis. Ser510 bears the Phosphoserine mark. Residues Thr511 and Thr516 each carry the phosphothreonine modification. Position 524 is a phosphotyrosine (Tyr524). The segment at 676–710 (SGDYSVQDSRKGSNGASSEFTRNETENRNFNNRRY) is disordered.

The protein belongs to the protein kinase superfamily. Ser/Thr protein kinase family. As to quaternary structure, interacts with KIPK1 and KIPK2 (via its cytosolic domain). As to expression, mostly expressed in roots, especially in root hairs.

The protein localises to the cell membrane. The catalysed reaction is L-seryl-[protein] + ATP = O-phospho-L-seryl-[protein] + ADP + H(+). It carries out the reaction L-threonyl-[protein] + ATP = O-phospho-L-threonyl-[protein] + ADP + H(+). Functionally, negatively regulates root hair elongation. This Arabidopsis thaliana (Mouse-ear cress) protein is Proline-rich receptor-like protein kinase PERK13 (PERK13).